The chain runs to 142 residues: Putative nickel-responsive regulator (142 aa).

The Ni(2+) site is built by histidine 77, histidine 88, histidine 90, and cysteine 96.

It belongs to the transcriptional regulatory CopG/NikR family. In terms of assembly, homotetramer. Ni(2+) is required as a cofactor.

Its function is as follows. Transcriptional regulator. This is Putative nickel-responsive regulator from Halobacterium salinarum (strain ATCC 700922 / JCM 11081 / NRC-1) (Halobacterium halobium).